The sequence spans 277 residues: Transport and Golgi organization protein 11 (277 aa).

Topologically, residues 1-256 are cytoplasmic; the sequence is MVTPQSPTPM…NNEQRTQREK (256 aa). Disordered stretches follow at residues 124–148 and 167–200; these read HFPS…NDLD and VARM…LNQQ. A phosphoserine mark is found at Ser-127, Ser-129, Ser-132, and Ser-133. The segment covering 174 to 200 has biased composition (polar residues); it reads GNDTNSVESDSQLTTGSASKRSQLNQQ. Thr-177 carries the phosphothreonine modification. Phosphoserine occurs at positions 179, 182, and 190. Residues Thr-216 and Thr-222 each carry the phosphothreonine modification. Positions 225-253 form a coiled coil; the sequence is EEILYLRRQLAKLNRRVLNIEINNEQRTQ. The chain crosses the membrane as a helical; Anchor for type IV membrane protein span at residues 257 to 274; it reads IVYCLGLAYFVLKTIFWL. Over 275–277 the chain is Lumenal; sequence NRN.

The protein belongs to the Tango11 family.

It localises to the endoplasmic reticulum membrane. It is found in the mitochondrion outer membrane. The protein resides in the peroxisome. May play a role in mitochondrial and peroxisomal fission. This Drosophila melanogaster (Fruit fly) protein is Transport and Golgi organization protein 11 (Tango11).